Consider the following 434-residue polypeptide: Double-stranded RNA-binding protein 2 (434 aa).

2 consecutive DRBM domains span residues 1 to 70 (MYKN…ALSN) and 87 to 155 (VYKN…SLKQ). Positions 402 to 434 (EKTASKETERAEFKDSSKGEPETARERLENLKI) are disordered.

Heterodimer with DRB1 or DRB5. Interacts with DCL1 and DCL5.

The protein resides in the cytoplasm. Functionally, binds double-stranded RNA. May be involved in RNA-mediated silencing. The chain is Double-stranded RNA-binding protein 2 (DRB2) from Arabidopsis thaliana (Mouse-ear cress).